We begin with the raw amino-acid sequence, 2371 residues long: NBAS subunit of NRZ tethering complex (2371 aa).

The segment at 1 to 1035 (MAAPESGPAL…KTEATTKLHD (1035 aa)) is interaction with USE1. WD repeat units follow at residues 130–169 (DPKPQWRRVAWSYDCTLLAYAESTGTVRVFDLMGSELFVI) and 316–355 (QEQDGIFKMSLSPDGMLLAAIHFSGKLSIWAIPSLKQQGE). Phosphoserine is present on residues serine 473 and serine 475. Positions 1036–2371 (MVDQLEQILS…TALRAAQHWV (1336 aa)) are interaction with ZW10 and RINT1. Lysine 1057 is modified (N6-acetyllysine).

Component of the NRZ complex composed of NBAS, ZW10 and RINT1/TIP20L; NRZ associates with SNAREs STX18, USE1, BNIP1/SEC20L and SEC22B (the assembly has been described as syntaxin 18 complex); links NRZ to SNARE USE1. In terms of tissue distribution, broadly expressed, with highest levels in heart and skeletal muscle, and lowest levels in liver, small intestine and thymus. Well expressed in retinal ganglion cells, epidermal skin cells, and leukocytes. Up-regulated together with N-myc in some neuroblastoma cell lines.

The protein resides in the cytoplasm. Its subcellular location is the endoplasmic reticulum. It localises to the endoplasmic reticulum membrane. Involved in Golgi-to-endoplasmic reticulum (ER) retrograde transport; the function is proposed to depend on its association in the NRZ complex which is believed to play a role in SNARE assembly at the ER. Required for normal embryonic development. May play a role in the nonsense-mediated decay pathway of mRNAs containing premature stop codons. The sequence is that of NBAS subunit of NRZ tethering complex from Homo sapiens (Human).